Consider the following 424-residue polypeptide: MDQPSGRSFMQVLCEKYSPENFPYRRGPGMGVHVPATPQGSPMKDRLNLPSVLVLNSCGITCAGDEREIAAFCAHVSELDLSDNKLQDWHEVSKIVSNVPQLEFLNLSSNPLSLSVLERTCAGSFSGVRKLVLNNSKASWETVHTILQELPDLEELFLCLNDYETVSCPSVCCHSLKLLHITDNNLQEWTEIRKLGVMFPSLDTLVLANNHVNAIEEPADSLARLFPNLRSISLHKSGLQSWEDIDKLNSFPKLEEVRLLGIPLLQPYTTEERRKLVVARLPSVSKLNGSVVTDGEREDSERFFIRYYVDVPQEEVPFRYHELITKYGKLEPLAEVDLRPQSSAKVEVHFNDQVEEVSIRLDQTVAELKRQLKTLVQLPTSSMLLYYFDHEAPFGPEEMKYSSRALHSFGIRDGDKIFVESKTK.

Phosphoserine is present on residues S18 and S41. 7 LRR repeats span residues 73 to 98, 99 to 123, 124 to 147, 150 to 172, 173 to 197, 199 to 224, and 226 to 250; these read CAHV…IVSN, VPQL…TCAG, SFSG…HTIL, LPDL…PSVC, CHSL…KLGV, FPSL…SLAR, and FPNL…KLNS. The LRRCT domain maps to 262–303; it reads IPLLQPYTTEERRKLVVARLPSVSKLNGSVVTDGEREDSERF. The Ubiquitin-like domain maps to 334 to 424; it reads AEVDLRPQSS…DKIFVESKTK (91 aa). Residues 350-375 adopt a coiled-coil conformation; that stretch reads FNDQVEEVSIRLDQTVAELKRQLKTL.

Its subcellular location is the cytoplasm. The protein localises to the cytoskeleton. Acts as a regulator of tubulin stability. The chain is Tubulin-specific chaperone cofactor E-like protein (Tbcel) from Rattus norvegicus (Rat).